Here is a 224-residue protein sequence, read N- to C-terminus: Ribonuclease HII (224 aa).

The 192-residue stretch at 33-224 folds into the RNase H type-2 domain; the sequence is FHVAGVDEVG…LKERYRNDVS (192 aa). Positions 39, 40, and 131 each coordinate a divalent metal cation.

The protein belongs to the RNase HII family. Mn(2+) serves as cofactor. Requires Mg(2+) as cofactor.

The protein resides in the cytoplasm. The enzyme catalyses Endonucleolytic cleavage to 5'-phosphomonoester.. In terms of biological role, endonuclease that specifically degrades the RNA of RNA-DNA hybrids. The protein is Ribonuclease HII of Bartonella tribocorum (strain CIP 105476 / IBS 506).